We begin with the raw amino-acid sequence, 452 residues long: Peptidase M20 domain-containing protein SMAC_03666.2 (452 aa).

The N-terminal stretch at 1 to 28 (MKATSNLLLLWGTSLLSPSSAFVIDNHH) is a signal peptide. Asn140 carries an N-linked (GlcNAc...) asparagine glycan. Zn(2+) is bound at residue Asp186. Glu220 functions as the Proton acceptor in the catalytic mechanism. Glu221 serves as a coordination point for Zn(2+). An N-linked (GlcNAc...) asparagine glycan is attached at Asn315.

This sequence belongs to the peptidase M20A family. The cofactor is Zn(2+).

The protein localises to the secreted. The sequence is that of Peptidase M20 domain-containing protein SMAC_03666.2 from Sordaria macrospora (strain ATCC MYA-333 / DSM 997 / K(L3346) / K-hell).